The primary structure comprises 236 residues: Phosphoribosylaminoimidazole-succinocarboxamide synthase (236 aa).

The protein belongs to the SAICAR synthetase family.

It catalyses the reaction 5-amino-1-(5-phospho-D-ribosyl)imidazole-4-carboxylate + L-aspartate + ATP = (2S)-2-[5-amino-1-(5-phospho-beta-D-ribosyl)imidazole-4-carboxamido]succinate + ADP + phosphate + 2 H(+). It functions in the pathway purine metabolism; IMP biosynthesis via de novo pathway; 5-amino-1-(5-phospho-D-ribosyl)imidazole-4-carboxamide from 5-amino-1-(5-phospho-D-ribosyl)imidazole-4-carboxylate: step 1/2. The sequence is that of Phosphoribosylaminoimidazole-succinocarboxamide synthase from Wolinella succinogenes (strain ATCC 29543 / DSM 1740 / CCUG 13145 / JCM 31913 / LMG 7466 / NCTC 11488 / FDC 602W) (Vibrio succinogenes).